The primary structure comprises 174 residues: Crossover junction endodeoxyribonuclease RuvC (174 aa).

Active-site residues include Asp8, Glu67, and Asp139. Residues Asp8, Glu67, and Asp139 each contribute to the Mg(2+) site.

It belongs to the RuvC family. As to quaternary structure, homodimer which binds Holliday junction (HJ) DNA. The HJ becomes 2-fold symmetrical on binding to RuvC with unstacked arms; it has a different conformation from HJ DNA in complex with RuvA. In the full resolvosome a probable DNA-RuvA(4)-RuvB(12)-RuvC(2) complex forms which resolves the HJ. It depends on Mg(2+) as a cofactor.

The protein localises to the cytoplasm. The catalysed reaction is Endonucleolytic cleavage at a junction such as a reciprocal single-stranded crossover between two homologous DNA duplexes (Holliday junction).. In terms of biological role, the RuvA-RuvB-RuvC complex processes Holliday junction (HJ) DNA during genetic recombination and DNA repair. Endonuclease that resolves HJ intermediates. Cleaves cruciform DNA by making single-stranded nicks across the HJ at symmetrical positions within the homologous arms, yielding a 5'-phosphate and a 3'-hydroxyl group; requires a central core of homology in the junction. The consensus cleavage sequence is 5'-(A/T)TT(C/G)-3'. Cleavage occurs on the 3'-side of the TT dinucleotide at the point of strand exchange. HJ branch migration catalyzed by RuvA-RuvB allows RuvC to scan DNA until it finds its consensus sequence, where it cleaves and resolves the cruciform DNA. This chain is Crossover junction endodeoxyribonuclease RuvC, found in Pseudomonas putida (strain ATCC 700007 / DSM 6899 / JCM 31910 / BCRC 17059 / LMG 24140 / F1).